The sequence spans 107 residues: ATP-dependent Clp protease adapter protein ClpS (107 aa).

Belongs to the ClpS family. As to quaternary structure, binds to the N-terminal domain of the chaperone ClpA.

Involved in the modulation of the specificity of the ClpAP-mediated ATP-dependent protein degradation. This Acinetobacter baylyi (strain ATCC 33305 / BD413 / ADP1) protein is ATP-dependent Clp protease adapter protein ClpS.